Reading from the N-terminus, the 482-residue chain is MIQGTGSNVGKSMLVAGLARALRKRGLSVAPFKPQNMSNNAAVTSDGGEIGRAQALQARAAGLAPHTDMNPVLLKPETDTGAQVIVQGKRRGTRAAGSFMRDKAGLLEATLESFHRLAAQHDIVLIEGAGSPAETNLRKGDIANMGFAEAAGVPVLLVGDIHRGGVIAQIVGTHTVLEPSDRARIKAFAVNRFRGDLSLFDGGRDDIARWTGWPSLGVVPWFWDAWKLPAEDMMDIASHKGGACKVVVPQLERMANFDDLDPLAAEPAVTVEIVPPGRALPGDADLVLIPGSKSTIGDLAYLRTQGWDIDILAHHRRGGHVLGLCGGYQMLGQSIDDPEGVDGHPGKVAGLGLLDVHTVMAGDKRVTLSAARTLEGDLPVSGYEIHMGRTTGPDCARAWLALEGRAEGATSADGRVRGSYLHGLFTSDAFRAQFLSDLGHQSDLDYDAGVEATLDELAAHLEQYMDVEGLLELAEPIPVPES.

The region spanning 243-430 is the GATase cobBQ-type domain; it reads ACKVVVPQLE…LHGLFTSDAF (188 aa). The active-site Nucleophile is the Cys325. Residue His422 is part of the active site.

It belongs to the CobB/CobQ family. CobQ subfamily.

Its pathway is cofactor biosynthesis; adenosylcobalamin biosynthesis. Its function is as follows. Catalyzes amidations at positions B, D, E, and G on adenosylcobyrinic A,C-diamide. NH(2) groups are provided by glutamine, and one molecule of ATP is hydrogenolyzed for each amidation. The sequence is that of Cobyric acid synthase from Ruegeria sp. (strain TM1040) (Silicibacter sp.).